A 417-amino-acid polypeptide reads, in one-letter code: MSTVQQAYELAKKQFADIGVDTEQALALLDQLPISMHCWQGDDVSGFEQGAGALSGGIQTTGNYPGKARTPQELRADLDKAVSLIPGKKRLNLHASYLEADHRVDRNEVKPEHFANWVAWAKANNMGLDFNPTYFSHPLSAEATLSHQNKEIRDFWIEHGKACRKISEYFGKELGTASVMNIWIPDGSKDFVVDKFAPRQRLVEALDEIIAEKIDAKYHLDAVESKLFGIGVESYTVGSNEFYAAYAVSRGTALCLDAGHFHPTEVISDKISAVMPFVQHLLLHVSRPVRWDSDHVVLLDDETQAIAGEIIRNQLFDRVHIGLDFFDASINRIAAWVIGTRNMQKALLRALLEPTDELRALENARDFGSRLALLEEQKSLPWQAVWDMYCERHNVPVGRRWLDEVRAYEKTVLSQRV.

Residues His-260, Asp-292, and Asp-294 each coordinate Mn(2+).

This sequence belongs to the rhamnose isomerase family. Requires Mn(2+) as cofactor.

It localises to the cytoplasm. The catalysed reaction is L-rhamnopyranose = L-rhamnulose. It functions in the pathway carbohydrate degradation; L-rhamnose degradation; glycerone phosphate from L-rhamnose: step 1/3. Its function is as follows. Catalyzes the interconversion of L-rhamnose and L-rhamnulose. The polypeptide is L-rhamnose isomerase (Mannheimia succiniciproducens (strain KCTC 0769BP / MBEL55E)).